A 3051-amino-acid polypeptide reads, in one-letter code: Biorientation of chromosomes in cell division protein 1-like 1 (3051 aa).

The segment covering 1–33 (MATNPQPQPPPPAPPPPPPQPQPQPPPPPPGPG) has biased composition (pro residues). Disordered regions lie at residues 1–47 (MATN…AGAG), 164–197 (HKEEGSGNTAPDDEKPDTSLITQGVPTPGPSANV), 215–288 (ASAA…CPVE), 301–393 (ILLN…KEDF), and 411–469 (VHTS…VRHA). The span at 34–47 (AGPGAGGAGGAGAG) shows a compositional bias: gly residues. Over residues 215–227 (ASAARASTETSNA) the composition is skewed to low complexity. Residues 246–263 (STDKERTSEDMADKEKST) are compositionally biased toward basic and acidic residues. Ser-266 carries the post-translational modification Phosphoserine. Over residues 312 to 393 (SEQKNKSTDK…KTVEGTKEDF (82 aa)) the composition is skewed to basic and acidic residues. Residues 418–443 (SFEEDTEEEVVTSDSMEEGEITSDDE) are compositionally biased toward acidic residues. An N6-acetyllysine modification is found at Lys-473. Phosphoserine occurs at positions 482 and 484. Composition is skewed to basic and acidic residues over residues 497 to 527 (IAKEKEERLLRRQINREKLEEKRKQKAEKTK), 549 to 570 (LEPKAARIKEVLKERKVLEKKV), and 580 to 653 (SRNV…LERE). The interval 497-1203 (IAKEKEERLL…EKHADHRSTL (707 aa)) is disordered. Phosphoserine is present on residues Ser-635 and Ser-659. A phosphothreonine mark is found at Thr-660 and Thr-733. Basic and acidic residues-rich tracts occupy residues 671–772 (TDTR…EENI), 804–852 (KDGK…KIQK), 866–878 (RRSESYSEDKCDM), 940–966 (KPDKEKNTEENDSEKQRKSKVEDKPFE), 984–1021 (TQKDSSHRAKLPLAKEKYKSDKDSTSTRLERKLSDGHK), and 1028–1075 (SSKD…ENRR). Ser-1077 bears the Phosphoserine mark. Polar residues-rich tracts occupy residues 1092 to 1103 (NTLSTPSGSSLQ) and 1135 to 1148 (SKTQDNRNNNSQQD). Phosphoserine occurs at positions 1145 and 1318. The residue at position 1354 (Thr-1354) is a Phosphothreonine. Disordered stretches follow at residues 1456–1550 (KLKH…QSEV), 1700–1725 (GSISSEEVDGSQGNMMRMGPKKETEG), and 1760–1890 (VVLG…TGLG). Residues 1465–1479 (KVKDISIDVERRNEN) show a composition bias toward basic and acidic residues. The span at 1482-1504 (VDTSAGSGSAPSVLHQRNGQTED) shows a compositional bias: polar residues. A phosphoserine mark is found at Ser-1531, Ser-1701, and Ser-1710. Phosphoserine occurs at positions 2013, 2025, 2128, and 2203. Disordered regions lie at residues 2189-2210 (DFEGPMPSAPPEAESPLASTSK), 2258-2285 (TSSVEDCEGPVSSAVPQEEGDPSVTPAE), 2403-2447 (STEE…FAGR), 2472-2519 (EDKS…AKDP), 2615-2635 (DQASAEKTGDDNSTRKSFPEE), and 2717-3051 (VENS…KAKR). Positions 2191-2207 (EGPMPSAPPEAESPLAS) are enriched in low complexity. Positions 2428 to 2439 (AEKEEKHGKECP) are enriched in basic and acidic residues. At Ser-2475 the chain carries Phosphoserine. Over residues 2483 to 2492 (GSSTASYSAG) the composition is skewed to low complexity. Phosphoserine is present on residues Ser-2501 and Ser-2618. 3 stretches are compositionally biased toward basic and acidic residues: residues 2621-2633 (KTGDDNSTRKSFP), 2724-2746 (TNEEIHSESYNKGEISSGRKDNA), and 2754-2767 (VEADPKEVEEEERH). Residues 2780 to 2789 (SEDEPDDNPD) show a composition bias toward acidic residues. Basic and acidic residues predominate over residues 2791–2822 (LDSRIETAQRQCPETEPHDTKEENSRDLEELP). Positions 2823–2834 (KTSSETNSTTSR) are enriched in polar residues. Basic and acidic residues predominate over residues 2848–2864 (TGEKPEQNDDDTIKSQE). Residues 2871-2880 (IKRKRGRPRK) show a composition bias toward basic residues. Residues 2872-2884 (KRKRGRPRKYPVE) constitute a DNA-binding region (a.T hook). Residues 2896–2910 (DTGIVTVEQSPSSSK) are compositionally biased toward polar residues. Phosphoserine occurs at positions 2905 and 2907. Residues 2944–2953 (VRRRGRKPKR) are compositionally biased toward basic residues. Ser-2954 is modified (phosphoserine). At Thr-2956 the chain carries Phosphothreonine. 3 positions are modified to phosphoserine: Ser-2958, Ser-2964, and Ser-2973. Residues Lys-2981 and Lys-2982 each participate in a glycyl lysine isopeptide (Lys-Gly) (interchain with G-Cter in ubiquitin) cross-link. The span at 2985-2998 (ESDEEEEEEEEDEP) shows a compositional bias: acidic residues. 2 positions are modified to phosphoserine: Ser-2986 and Ser-3019. The span at 3000 to 3020 (GATTRSTTRSEAQRSKTQLSP) shows a compositional bias: polar residues. Positions 3039–3051 (QRVEEAPVKKAKR) are enriched in basic and acidic residues.

This sequence belongs to the BOD1 family. As to quaternary structure, interacts (via COMPASS-Shg1 domain) with SETD1A at stalled replication forks; this interaction mediates FANCD2-dependent nucleosome remodeling at reversed forks protecting them from nucleolytic degradation.

The protein localises to the chromosome. Its function is as follows. Component of the fork protection machinery required to protect stalled/damaged replication forks from uncontrolled DNA2-dependent resection. Acts by stabilizing RAD51 at stalled replication forks and protecting RAD51 nucleofilaments from the antirecombinogenic activities of FBH1 and BLM. Does not regulate spindle orientation. This Homo sapiens (Human) protein is Biorientation of chromosomes in cell division protein 1-like 1.